Reading from the N-terminus, the 581-residue chain is Leucine aminopeptidase 3, chloroplastic (581 aa).

A chloroplast-targeting transit peptide spans 1 to 50 (MAVTLVTSCASSSRFHFRSFSSSPSSLSSCFVRFQLLSRLRVSFAITPLY). Residues lysine 350 and aspartate 355 each contribute to the Mn(2+) site. Lysine 362 is an active-site residue. Mn(2+) contacts are provided by aspartate 375, aspartate 435, and glutamate 437. Residue arginine 439 is part of the active site.

It belongs to the peptidase M17 family. As to quaternary structure, homohexamer (dimer of homotrimers). Requires Mn(2+) as cofactor.

It is found in the plastid. The protein resides in the chloroplast. It catalyses the reaction Release of an N-terminal amino acid, Xaa-|-Yaa-, in which Xaa is preferably Leu, but may be other amino acids including Pro although not Arg or Lys, and Yaa may be Pro. Amino acid amides and methyl esters are also readily hydrolyzed, but rates on arylamides are exceedingly low.. The enzyme catalyses Release of N-terminal proline from a peptide.. Presumably involved in the processing and regular turnover of intracellular proteins. Catalyzes the removal of unsubstituted N-terminal amino acids from various peptides. Possesses Cys-Gly dipeptidase activity. In Arabidopsis thaliana (Mouse-ear cress), this protein is Leucine aminopeptidase 3, chloroplastic.